Here is a 317-residue protein sequence, read N- to C-terminus: Small ribosomal subunit protein uS2 (317 aa).

Ser-2 carries the post-translational modification N-acetylserine. 2 laminin-binding regions span residues Ile-161–Arg-180 and Arg-205–Gly-229. [DE]-W-[ST] repeat units lie at residues Glu-230–Ser-232, Asp-245–Ser-247, Asp-288–Ser-290, Asp-297–Ser-299, and Glu-315–Ser-317. Residues Glu-242–Ser-317 form a laminin-binding region. Residues Pro-278–Ser-317 form a disordered region.

The protein belongs to the universal ribosomal protein uS2 family. In terms of assembly, monomer (37LRP) and homodimer (67LR). Component of the small ribosomal subunit. Mature ribosomes consist of a small (40S) and a large (60S) subunit. The 40S subunit contains about 33 different proteins and 1 molecule of RNA (18S). The 60S subunit contains about 49 different proteins and 3 molecules of RNA (28S, 5.8S and 5S). Interacts with rps21. Interacts with several laminins including at least lamb1. Interacts with mdk. Acylated. Acylation may be a prerequisite for conversion of the monomeric 37 kDa laminin receptor precursor (37LRP) to the mature dimeric 67 kDa laminin receptor (67LR), and may provide a mechanism for membrane association. Post-translationally, cleaved by stromelysin-3 (ST3) at the cell surface. Cleavage by stromelysin-3 may be a mechanism to alter cell-extracellular matrix interactions.

It localises to the cell membrane. It is found in the cytoplasm. The protein resides in the nucleus. In terms of biological role, required for the assembly and/or stability of the 40S ribosomal subunit. Required for the processing of the 20S rRNA-precursor to mature 18S rRNA in a late step of the maturation of 40S ribosomal subunits. Also functions as a cell surface receptor for laminin. Plays a role in cell adhesion to the basement membrane and in the consequent activation of signaling transduction pathways. May play a role in cell fate determination and tissue morphogenesis. The polypeptide is Small ribosomal subunit protein uS2 (rpsa) (Ictalurus punctatus (Channel catfish)).